The sequence spans 329 residues: DGAT1/2-independent enzyme synthesizing storage lipids (329 aa).

The Lumenal portion of the chain corresponds to 1-50; sequence MIDNNQTCAAGQDSVPYVTCMIYVLEEWLGVEQLEDYLNFANHLLWVFTP. An N-linked (GlcNAc...) asparagine glycan is attached at Asn-5. Residues 51 to 71 form a helical membrane-spanning segment; that stretch reads LILLILPYFTIFLLYLTIIFL. The Cytoplasmic segment spans residues 72 to 120; sequence HIYKRKNVLKEAYSHNLWDGARKTVATLWDGHAAVWHGYEVHGMEKIPE. A helical membrane pass occupies residues 121-141; it reads GAALIIFYHGAIPIDFYYFMA. His-129 is a catalytic residue. The Lumenal portion of the chain corresponds to 142 to 329; sequence KIFIQKGRTC…DRFHKEQKAH (188 aa).

Belongs to the diacylglycerol acyltransferase family. Highly divergent. As to expression, widely expressed, with highest level in the brain, followed by lung and duodenum, and lowest levels in tongue, testis, skin and ileum.

Its subcellular location is the endoplasmic reticulum membrane. The enzyme catalyses a 1,2-diacylglycerol + a 1,2-diacyl-sn-glycero-3-phosphocholine = a triacylglycerol + a 1-acyl-sn-glycero-3-phosphocholine. The catalysed reaction is a 1-O-alkyl-2-acyl-sn-glycero-3-phosphocholine + a 1,2-diacylglycerol = a 1-O-alkyl-sn-glycero-3-phosphocholine + a triacylglycerol. It catalyses the reaction a 2-acylglycerol + an acyl-CoA = a 1,2-diacylglycerol + CoA. It carries out the reaction an acyl-CoA + a 1,2-diacyl-sn-glycerol = a triacyl-sn-glycerol + CoA. The enzyme catalyses 2-(9Z-octadecenoyl)-glycerol + (9Z)-octadecenoyl-CoA = 1,2-di-(9Z-octadecenoyl)-glycerol + CoA. The catalysed reaction is 1,2-di-(9Z-octadecenoyl)-sn-glycerol + (9Z)-octadecenoyl-CoA = 1,2,3-tri-(9Z-octadecenoyl)-glycerol + CoA. With respect to regulation, acyltransferase activity is specifically inhibited by TMX1 at the endoplasmic reticulum, restricting accumulation of triacylglycerol. Its function is as follows. Catalytic subunit of the alternative triglyceride biosynthesis pathway, which mediates formation of triacylglycerol from diacylglycerol and membrane phospholipids. Synthesizes triacylglycerol at the expense of membrane phospholipids, such as phosphatidylcholine (PC) and its ether-linked form (ePC), thereby altering the composition of membranes. The alternative triglyceride biosynthesis pathway is probably required to provide the energy required for rapid growth when fuel sources are limiting. It maintains mitochondrial function during periods of extracellular lipid starvation. Can also use acyl-CoA as donor: acts as a acyl-CoA:monoacylglycerol acyltransferase (MGAT), but also shows acyl-CoA:diacylglycerol acyltransferase (DGAT) activity. This chain is DGAT1/2-independent enzyme synthesizing storage lipids, found in Mus musculus (Mouse).